A 301-amino-acid chain; its full sequence is uncharacterized protein (301 aa).

Positions 1–26 (MKGFSCSRPGYLTGLLLLAVAPILTA) are cleaved as a signal peptide. The N-palmitoyl cysteine moiety is linked to residue Cys27. Cys27 carries S-diacylglycerol cysteine lipidation. The region spanning 46–243 (KLKPATIEYW…YNAKINIWSH (198 aa)) is the TNase-like domain. The tract at residues 64–136 (NYASEERRKE…SKGDSTGDEK (73 aa)) is disordered. Basic and acidic residues-rich tracts occupy residues 67 to 95 (SEER…KTED) and 120 to 136 (TPEK…GDEK).

The protein localises to the cell membrane. This is an uncharacterized protein from Mycoplasma pneumoniae (strain ATCC 29342 / M129 / Subtype 1) (Mycoplasmoides pneumoniae).